Here is a 520-residue protein sequence, read N- to C-terminus: MENIEKLLMQEKILMLELDLVRAKISLARANGSSQQGDLSLHRETPVKEEAVHSALATFTPTQVKAIPEQTAPGKESTNPLMASILPKDMNPVQTGIRLAVPGDFLRPHQGIPIPQKSELSSTVVPLRDESGIQHPHINYYVVYNGPHAGIYDDWGCTKAATNGVPGVAHKKFATITEARAAADAYTTSQQTDRLNFIPKGEAQLKPKSFREALTSPPKQKAHWLTLGTKRPSSDPAPKEISFAPEITMDDFLYLYDLGRKFDGEGDDTMFTTDNEKISLFNFRKNADPQMVREAYAAGLIKTIYPSNNLQEIKYLPKKVKDAVKRFRTNCIKNTEKDIFLKIRSTIPVWTIQGLLHKPRQVIEIGVSKKVVPTESKAMESKIQIEDLTELAVKTGEQFIQSLLRLNDKKKIFVNMVEDDTLVYSKNIKDTVSEDQRAIETFQQRVISGNLLGFHCPAICHFIERTVEKEGGSYKVHHCDKGKAIVQDASADSGPKDGPPPTRSIVEKEDVPTTSSKQVD.

Residues 486 to 520 (VQDASADSGPKDGPPPTRSIVEKEDVPTTSSKQVD) form a disordered region.

It belongs to the caulimoviridae viroplasmin family.

Its subcellular location is the host cytoplasm. Functionally, enhances the ribosomal termination-reinitiation event leading to the translation of major open reading frames on the polycistronic viral RNAs. The sequence is that of Transactivator/viroplasmin protein from Cauliflower mosaic virus (strain BBC) (CaMV).